A 101-amino-acid polypeptide reads, in one-letter code: RNA-binding protein Hfq (101 aa).

The Sm domain maps to Asp-9–Ile-68. The tract at residues Ile-68 to Val-91 is disordered. The span at Gln-77–Val-91 shows a compositional bias: low complexity.

It belongs to the Hfq family. As to quaternary structure, homohexamer.

Its function is as follows. RNA chaperone that binds small regulatory RNA (sRNAs) and mRNAs to facilitate mRNA translational regulation in response to envelope stress, environmental stress and changes in metabolite concentrations. Also binds with high specificity to tRNAs. This is RNA-binding protein Hfq from Haemophilus ducreyi (strain 35000HP / ATCC 700724).